Reading from the N-terminus, the 293-residue chain is N-acetylmannosamine kinase (293 aa).

ATP-binding positions include 5–12 (AIDIGGTK) and 133–140 (GVGGGLVI). Positions 157, 167, 169, and 174 each coordinate Zn(2+).

It belongs to the ROK (NagC/XylR) family. NanK subfamily. As to quaternary structure, homodimer.

It carries out the reaction an N-acyl-D-mannosamine + ATP = an N-acyl-D-mannosamine 6-phosphate + ADP + H(+). It functions in the pathway amino-sugar metabolism; N-acetylneuraminate degradation; D-fructose 6-phosphate from N-acetylneuraminate: step 2/5. Catalyzes the phosphorylation of N-acetylmannosamine (ManNAc) to ManNAc-6-P. The sequence is that of N-acetylmannosamine kinase from Vibrio vulnificus (strain CMCP6).